Here is a 659-residue protein sequence, read N- to C-terminus: A-type ATP synthase subunit I (659 aa).

The next 8 helical transmembrane spans lie at Phe-376–Ala-396, Ile-415–Gly-435, Met-460–Val-480, Gly-489–Leu-509, Leu-518–Ala-538, Met-542–Ala-562, Ala-568–Ile-588, and Ile-590–Phe-610.

Belongs to the V-ATPase 116 kDa subunit family. As to quaternary structure, has multiple subunits with at least A(3), B(3), C, D, E, F, H, I and proteolipid K(x).

The protein localises to the cell membrane. Component of the A-type ATP synthase that produces ATP from ADP in the presence of a proton gradient across the membrane. In Pyrococcus horikoshii (strain ATCC 700860 / DSM 12428 / JCM 9974 / NBRC 100139 / OT-3), this protein is A-type ATP synthase subunit I.